The sequence spans 147 residues: Large ribosomal subunit protein bL9 (147 aa).

The tract at residues 44–63 is disordered; it reads VKTLDAQKRSEDKRKEQEKL. Residues 48 to 63 are compositionally biased toward basic and acidic residues; it reads DAQKRSEDKRKEQEKL.

It belongs to the bacterial ribosomal protein bL9 family.

Functionally, binds to the 23S rRNA. In Brevibacillus brevis (strain 47 / JCM 6285 / NBRC 100599), this protein is Large ribosomal subunit protein bL9.